A 30-amino-acid polypeptide reads, in one-letter code: GIPCGESCVYIPCLTSAIGCSCKSKVCYRN.

Residues Gly1 to Asn30 constitute a cross-link (cyclopeptide (Gly-Asn)). 3 disulfides stabilise this stretch: Cys4/Cys20, Cys8/Cys22, and Cys13/Cys27.

Belongs to the cyclotide family. Bracelet subfamily. This is a cyclic peptide.

Probably participates in a plant defense mechanism. The polypeptide is Cycloviolacin-H1 (Viola hederacea (Australian violet)).